A 631-amino-acid polypeptide reads, in one-letter code: Fusexin 1 (631 aa).

The signal sequence occupies residues 1–19; it reads MRRAALILAFVLFIGLSSA. The tract at residues 20–90 is domain I N-terminus; it reads TVTSADSITY…THQDSKLKYS (71 aa). Residues 20 to 537 are Extracellular-facing; that stretch reads TVTSADSITY…NLFGGSGSGD (518 aa). The domain II N-terminus stretch occupies residues 91–170; the sequence is TSTSDELRDI…KLATPAYIDN (80 aa). Ca(2+)-binding residues include Asp112, Ser146, Tyr149, and Asp150. A disulfide bridge connects residues Cys125 and Cys155. Residues 143 to 148 form a fusion loop, required for fusogenic activity, not required for membrane surface localization region; that stretch reads SVTSPV. The interval 171–224 is domain I central section; that stretch reads PDEIFTAKAELQAGDKTIQSATLSNGDAGDGTVTDLGDSKISWNGNLDLGASEP. Residues 225–316 form a domain II C-terminus region; the sequence is ENSRVIALYS…KDSSLDTGSF (92 aa). The tract at residues 317–348 is domain I C-terminus; the sequence is VYDTPELLSYPSFTVYVDAGENGYIEVTKPTG. The segment at 349–455 is domain III; the sequence is DPDIISTSST…SVSVTGIQQS (107 aa). 3 cysteine pairs are disulfide-bonded: Cys389–Cys432, Cys457–Cys477, and Cys490–Cys506. The interval 443-467 is disordered; it reads DSTSVSVTGIQQSECNPGDQRREKN. The domain IV, required for fusogenic activity stretch occupies residues 456–509; that stretch reads ECNPGDQRREKNENDRWEIYTCQDNGLTYEYDVTCAEDEKAVAQGDNQFSCEKQ. The segment at 510 to 537 is stem; it reads DDDSGGGDNTGSDSGLFSNLFGGSGSGD. Residues 538 to 558 form a helical membrane-spanning segment; sequence LLTQVHTALSILAGLVAGFFG. Over 559 to 590 the chain is Cytoplasmic; the sequence is YRGARWIHGETDIKGGFKLESRNVSRVKRGSP. Residues 591–611 form a helical membrane-spanning segment; that stretch reads VAGIVGAVLGFVVGYGVASVF. Position 612 (His612) is a topological domain, extracellular. A helical membrane pass occupies residues 613 to 630; that stretch reads PVVQIIVVLGIAVGLYYF. Arg631 is a topological domain (cytoplasmic).

This sequence belongs to the HAP2/GCS1 family. Fusexin 1 subfamily. In terms of assembly, monomer in solution, crystallizes as a trimer in high salt (2.5 M NaCl, 0.2 M CaCl(2)). The trimer is stabilized by interdomain contacts and numerous Ca(2+) and Na(+) ions.

It localises to the cell surface. It is found in the cell membrane. Its function is as follows. Exhibits fusogenic activity. Mediates cell-cell fusion in mammalian cells when present in both cells (bilateral fusion). The chain is Fusexin 1 from Uncultured archaeon.